The following is a 367-amino-acid chain: Phosphoribosylaminoimidazole-succinocarboxamide synthase (367 aa).

This sequence belongs to the SAICAR synthetase family.

The catalysed reaction is 5-amino-1-(5-phospho-D-ribosyl)imidazole-4-carboxylate + L-aspartate + ATP = (2S)-2-[5-amino-1-(5-phospho-beta-D-ribosyl)imidazole-4-carboxamido]succinate + ADP + phosphate + 2 H(+). The protein operates within purine metabolism; IMP biosynthesis via de novo pathway; 5-amino-1-(5-phospho-D-ribosyl)imidazole-4-carboxamide from 5-amino-1-(5-phospho-D-ribosyl)imidazole-4-carboxylate: step 1/2. The protein is Phosphoribosylaminoimidazole-succinocarboxamide synthase of Shewanella sp. (strain W3-18-1).